Here is a 161-residue protein sequence, read N- to C-terminus: SsrA-binding protein (161 aa).

Belongs to the SmpB family.

The protein resides in the cytoplasm. Its function is as follows. Required for rescue of stalled ribosomes mediated by trans-translation. Binds to transfer-messenger RNA (tmRNA), required for stable association of tmRNA with ribosomes. tmRNA and SmpB together mimic tRNA shape, replacing the anticodon stem-loop with SmpB. tmRNA is encoded by the ssrA gene; the 2 termini fold to resemble tRNA(Ala) and it encodes a 'tag peptide', a short internal open reading frame. During trans-translation Ala-aminoacylated tmRNA acts like a tRNA, entering the A-site of stalled ribosomes, displacing the stalled mRNA. The ribosome then switches to translate the ORF on the tmRNA; the nascent peptide is terminated with the 'tag peptide' encoded by the tmRNA and targeted for degradation. The ribosome is freed to recommence translation, which seems to be the essential function of trans-translation. This chain is SsrA-binding protein, found in Vibrio vulnificus (strain YJ016).